Consider the following 434-residue polypeptide: Glutamyl-tRNA reductase (434 aa).

Residues 52–55 (TCNR), Ser115, 120–122 (ETQ), and Gln126 contribute to the substrate site. The active-site Nucleophile is the Cys53. 195–200 (GAGEMI) contributes to the NADP(+) binding site.

This sequence belongs to the glutamyl-tRNA reductase family. Homodimer.

The catalysed reaction is (S)-4-amino-5-oxopentanoate + tRNA(Glu) + NADP(+) = L-glutamyl-tRNA(Glu) + NADPH + H(+). Its pathway is porphyrin-containing compound metabolism; protoporphyrin-IX biosynthesis; 5-aminolevulinate from L-glutamyl-tRNA(Glu): step 1/2. Catalyzes the NADPH-dependent reduction of glutamyl-tRNA(Glu) to glutamate 1-semialdehyde (GSA). The protein is Glutamyl-tRNA reductase of Cupriavidus metallidurans (strain ATCC 43123 / DSM 2839 / NBRC 102507 / CH34) (Ralstonia metallidurans).